The following is a 202-amino-acid chain: Glycerol-3-phosphate acyltransferase (202 aa).

The next 4 helical transmembrane spans lie at 11-31 (ALIA…GLIL), 87-107 (PALA…WLGF), 116-136 (FIGV…AIWL), and 158-178 (VILW…LAAL).

The protein belongs to the PlsY family. In terms of assembly, probably interacts with PlsX.

It localises to the cell inner membrane. It catalyses the reaction an acyl phosphate + sn-glycerol 3-phosphate = a 1-acyl-sn-glycero-3-phosphate + phosphate. It functions in the pathway lipid metabolism; phospholipid metabolism. Functionally, catalyzes the transfer of an acyl group from acyl-phosphate (acyl-PO(4)) to glycerol-3-phosphate (G3P) to form lysophosphatidic acid (LPA). This enzyme utilizes acyl-phosphate as fatty acyl donor, but not acyl-CoA or acyl-ACP. This chain is Glycerol-3-phosphate acyltransferase, found in Methylorubrum populi (strain ATCC BAA-705 / NCIMB 13946 / BJ001) (Methylobacterium populi).